Reading from the N-terminus, the 173-residue chain is MAIVLGVDPGSLKTGFGLVNHVSGRCEYIASGVIRMKSSDELPERLKTIFESLVEIIECYQPSEFAIEKVFMAKSAGSALKLGQARGAAIVAAVTNGLPVGEYEARKVKQSVVGSGAADKSQVQHMVRTLLHLTATPQEDAADALAIALCHINTQASLIRLAGSRQFRRGRLV.

Active-site residues include D8, E68, and D140. The Mg(2+) site is built by D8, E68, and D140.

The protein belongs to the RuvC family. Homodimer which binds Holliday junction (HJ) DNA. The HJ becomes 2-fold symmetrical on binding to RuvC with unstacked arms; it has a different conformation from HJ DNA in complex with RuvA. In the full resolvosome a probable DNA-RuvA(4)-RuvB(12)-RuvC(2) complex forms which resolves the HJ. Requires Mg(2+) as cofactor.

It is found in the cytoplasm. It carries out the reaction Endonucleolytic cleavage at a junction such as a reciprocal single-stranded crossover between two homologous DNA duplexes (Holliday junction).. In terms of biological role, the RuvA-RuvB-RuvC complex processes Holliday junction (HJ) DNA during genetic recombination and DNA repair. Endonuclease that resolves HJ intermediates. Cleaves cruciform DNA by making single-stranded nicks across the HJ at symmetrical positions within the homologous arms, yielding a 5'-phosphate and a 3'-hydroxyl group; requires a central core of homology in the junction. The consensus cleavage sequence is 5'-(A/T)TT(C/G)-3'. Cleavage occurs on the 3'-side of the TT dinucleotide at the point of strand exchange. HJ branch migration catalyzed by RuvA-RuvB allows RuvC to scan DNA until it finds its consensus sequence, where it cleaves and resolves the cruciform DNA. The protein is Crossover junction endodeoxyribonuclease RuvC of Saccharophagus degradans (strain 2-40 / ATCC 43961 / DSM 17024).